The following is a 98-amino-acid chain: Aspartyl/glutamyl-tRNA(Asn/Gln) amidotransferase subunit C (98 aa).

Residues 76–98 form a disordered region; the sequence is QVLSGAPDAEDGRFKVPAILEED.

The protein belongs to the GatC family. As to quaternary structure, heterotrimer of A, B and C subunits.

The catalysed reaction is L-glutamyl-tRNA(Gln) + L-glutamine + ATP + H2O = L-glutaminyl-tRNA(Gln) + L-glutamate + ADP + phosphate + H(+). It catalyses the reaction L-aspartyl-tRNA(Asn) + L-glutamine + ATP + H2O = L-asparaginyl-tRNA(Asn) + L-glutamate + ADP + phosphate + 2 H(+). In terms of biological role, allows the formation of correctly charged Asn-tRNA(Asn) or Gln-tRNA(Gln) through the transamidation of misacylated Asp-tRNA(Asn) or Glu-tRNA(Gln) in organisms which lack either or both of asparaginyl-tRNA or glutaminyl-tRNA synthetases. The reaction takes place in the presence of glutamine and ATP through an activated phospho-Asp-tRNA(Asn) or phospho-Glu-tRNA(Gln). This Renibacterium salmoninarum (strain ATCC 33209 / DSM 20767 / JCM 11484 / NBRC 15589 / NCIMB 2235) protein is Aspartyl/glutamyl-tRNA(Asn/Gln) amidotransferase subunit C.